A 164-amino-acid polypeptide reads, in one-letter code: Ribonuclease P protein component 2 (164 aa).

This sequence belongs to the eukaryotic/archaeal RNase P protein component 2 family. Consists of a catalytic RNA component and at least 4-5 protein subunits.

It localises to the cytoplasm. The enzyme catalyses Endonucleolytic cleavage of RNA, removing 5'-extranucleotides from tRNA precursor.. Functionally, part of ribonuclease P, a protein complex that generates mature tRNA molecules by cleaving their 5'-ends. This is Ribonuclease P protein component 2 from Halobacterium salinarum (strain ATCC 29341 / DSM 671 / R1).